The following is a 332-amino-acid chain: tRNA U34 carboxymethyltransferase (332 aa).

Carboxy-S-adenosyl-L-methionine contacts are provided by residues lysine 91, tryptophan 105, lysine 110, glycine 130, 152 to 154, 181 to 182, methionine 196, tyrosine 200, and arginine 315; these read DPS and IE.

This sequence belongs to the class I-like SAM-binding methyltransferase superfamily. CmoB family. As to quaternary structure, homotetramer.

It carries out the reaction carboxy-S-adenosyl-L-methionine + 5-hydroxyuridine(34) in tRNA = 5-carboxymethoxyuridine(34) in tRNA + S-adenosyl-L-homocysteine + H(+). Functionally, catalyzes carboxymethyl transfer from carboxy-S-adenosyl-L-methionine (Cx-SAM) to 5-hydroxyuridine (ho5U) to form 5-carboxymethoxyuridine (cmo5U) at position 34 in tRNAs. The protein is tRNA U34 carboxymethyltransferase of Shewanella putrefaciens (strain CN-32 / ATCC BAA-453).